The sequence spans 252 residues: F-box/SPRY domain-containing protein 1 (252 aa).

In terms of domain architecture, F-box spans 1-48 (MVDPLCNYNVLEAIFSYLELSDLSRCSQVCKSWYHFLNDENSDVWRWH). The B30.2/SPRY domain maps to 58 to 250 (IKSDLLASVT…VSMVYLGTPL (193 aa)).

It belongs to the FBXO45/Fsn family. Component of an E3 ubiquitin ligase complex composed of hiw and Fsn.

The protein resides in the synapse. Its pathway is protein modification; protein ubiquitination. Required in the presynaptic motoneuron to down-regulate the levels of wnd and restrain synaptic terminal growth at the neuromuscular junction (NMJ). The chain is F-box/SPRY domain-containing protein 1 from Drosophila mojavensis (Fruit fly).